An 822-amino-acid chain; its full sequence is Calpain-3 (822 aa).

Residues 1-36 form a disordered region; sequence MPTVISASVAPRTGAEPMSPGPIAQAAQDKGTEAGG. The region spanning 74–418 is the Calpain catalytic domain; that stretch reads LFVDPEFPPD…FTKLEICNLT (345 aa). Active-site residues include Cys-129, His-335, and Asn-359. Positions 419-587 are domain III; sequence ADALESDKLQ…KRNLSEEVEN (169 aa). Residues 588-650 are linker; it reads TISVDRPVKK…EPGNTDQESE (63 aa). A disordered region spans residues 604-652; that stretch reads IFVSDRANSNKELGVDQETEEGKDNTSPDKQAKSPQLEPGNTDQESEEQ. A compositionally biased stretch (basic and acidic residues) spans 623-635; sequence EEGKDNTSPDKQA. 4 consecutive EF-hand domains span residues 650–684, 693–726, 723–758, and 788–822; these read EEQRQFRNIFRQIAGDDMEICADELKNVLNRVVNK, FTLESCRSMIALMDTDGSGRLNLQEFHHLWKKIK, KKIKTWQKIFKHYDTDQSGTINSYEMRNAVKDAGFH, and VRLEGMFRAFNAFDKDGDGIIKLNVLEWLQLTMYA. A domain IV region spans residues 651–822; it reads EQRQFRNIFR…LEWLQLTMYA (172 aa). Ca(2+)-binding residues include Ala-663, Asp-666, Glu-668, Glu-673, Asp-706, Asp-708, Ser-710, Arg-712, Glu-717, Asp-736, Asp-738, Ser-740, Thr-742, Glu-747, Asp-801, Asp-803, Asp-805, and Ile-807.

This sequence belongs to the peptidase C2 family. In terms of assembly, homodimer; via EF-hand domain 4. Interacts with TTN/titin. Interacts with CMYA5; this interaction, which results in CMYA5 proteolysis, may protect CAPN3 from autolysis. Interacts with SIMC1. Interacts with UTP25; the interaction is required for CAPN3 translocation to the nucleolus. In terms of tissue distribution, skeletal muscle.

The protein localises to the cytoplasm. It localises to the nucleus. The protein resides in the nucleolus. The catalysed reaction is Broad endopeptidase activity.. Activated by micromolar concentrations of calcium and inhibited by calpastatin. In terms of biological role, calcium-regulated non-lysosomal thiol-protease. Proteolytically cleaves CTBP1. Mediates, with UTP25, the proteasome-independent degradation of p53/TP53. The polypeptide is Calpain-3 (CAPN3) (Bos taurus (Bovine)).